An 873-amino-acid chain; its full sequence is DNA helicase/primase complex-associated protein (873 aa).

The tract at residues 394–422 (PPLPRDDGDGENNVVEVSSSTGGAHPPSD) is disordered.

Belongs to the herpesviridae HEPA family. As to quaternary structure, associates with the primase and the helicase to form the helicase-primase complex. Interacts with the origin-binding protein. Interacts with the polymerase catalytic subunit.

Its subcellular location is the host nucleus. Functionally, component of the helicase/primase complex. Unwinds the DNA at the replication forks and generates single-stranded DNA for both leading and lagging strand synthesis. The primase synthesizes short RNA primers on the lagging strand that the polymerase presumably elongates using dNTPs. The primase-associated factor has no known catalytic activity in the complex and may serve to facilitate the formation of the replisome by directly interacting with the origin-binding protein and the polymerase. This chain is DNA helicase/primase complex-associated protein (UL102), found in Human cytomegalovirus (strain Merlin) (HHV-5).